A 62-amino-acid polypeptide reads, in one-letter code: Temporin-La (62 aa).

The first 22 residues, 1-22 (MFPLKKSLLLLFFLGTINLSFC), serve as a signal peptide directing secretion. The propeptide occupies 23–47 (EEERDVDQDERRDDPGERNVQVEKR). At L60 the chain carries Leucine amide.

Belongs to the frog skin active peptide (FSAP) family. Temporin subfamily. In terms of tissue distribution, expressed by the skin glands.

It localises to the secreted. The protein localises to the target cell membrane. In terms of biological role, antimicrobial peptide with amphipathic alpha-helical structure that acts against both Gram-positive and Gram-negative bacteria and the fungus Candida albicans. Is active against S.aureus ATCC 25923 (MIC=2.5 ug/ml), S.suis 2 CVCC 606 (MIC=15.6 ug/ml), Salmonella ATCC 20020 (MIC=15.6 ug/ml), P.aeruginosa ATCC 227853 (MIC=60 ug/ml), and C.albicans ATCC10231 (MIC=31.25 ug/ml). Is not active against B.subtilis ADB403, E.coli ATCC 25922, and K.pneumoniae ATCC 700603. Also shows a strong antitumor activity, but no hemolytic activity. This Aquarana catesbeiana (American bullfrog) protein is Temporin-La.